We begin with the raw amino-acid sequence, 316 residues long: Pantothenate kinase (316 aa).

99-106 (GSVAVGKS) serves as a coordination point for ATP.

This sequence belongs to the prokaryotic pantothenate kinase family.

The protein localises to the cytoplasm. The enzyme catalyses (R)-pantothenate + ATP = (R)-4'-phosphopantothenate + ADP + H(+). Its pathway is cofactor biosynthesis; coenzyme A biosynthesis; CoA from (R)-pantothenate: step 1/5. The chain is Pantothenate kinase (coaA) from Pasteurella multocida (strain Pm70).